The primary structure comprises 488 residues: Protein nucleotidyltransferase YdiU (488 aa).

ATP contacts are provided by G91, G93, R94, K114, D126, G127, R177, and R184. The disordered stretch occupies residues 108-127 (RFDIQLKGSGPTPYSRRGDG). The active-site Proton acceptor is D253. Mg(2+) is bound by residues N254 and D263. D263 is a binding site for ATP.

It belongs to the SELO family. Mg(2+) is required as a cofactor. It depends on Mn(2+) as a cofactor.

The catalysed reaction is L-seryl-[protein] + ATP = 3-O-(5'-adenylyl)-L-seryl-[protein] + diphosphate. It catalyses the reaction L-threonyl-[protein] + ATP = 3-O-(5'-adenylyl)-L-threonyl-[protein] + diphosphate. It carries out the reaction L-tyrosyl-[protein] + ATP = O-(5'-adenylyl)-L-tyrosyl-[protein] + diphosphate. The enzyme catalyses L-histidyl-[protein] + UTP = N(tele)-(5'-uridylyl)-L-histidyl-[protein] + diphosphate. The catalysed reaction is L-seryl-[protein] + UTP = O-(5'-uridylyl)-L-seryl-[protein] + diphosphate. It catalyses the reaction L-tyrosyl-[protein] + UTP = O-(5'-uridylyl)-L-tyrosyl-[protein] + diphosphate. Nucleotidyltransferase involved in the post-translational modification of proteins. It can catalyze the addition of adenosine monophosphate (AMP) or uridine monophosphate (UMP) to a protein, resulting in modifications known as AMPylation and UMPylation. This is Protein nucleotidyltransferase YdiU from Bacillus anthracis (strain A0248).